Reading from the N-terminus, the 671-residue chain is MSSVDVLLTVGKLDASLALLTTQDHHVIEFPTVLLPENVKAGSIIKMQVSQNLEEEKKQRNHFKSIQAKILEKYGTHKPESPVLKIVNVTQTSCVLAWDPLKLGSAKLKSLILYRKGIRSMVIPNPFKVTTTKISGLSVDTPYEFQLKLITTSGTLWSEKVILRTHKMTDMSGITVCLGPLDPLKEISDLQISQCLSHIGARPLQRHVAIDTTHFVCNDLDNEESNEELIRAKHNNIPIVRPEWVRACEVEKRIVGVRGFYLDADQSILKNYTFPPVNEEELSYSKENEPVAEVADENKMPEDTTDVEQVASPNDNESNPSEAKEQGEKSGHETAPVSPVEDPLHASTALENETTIETVNPSVRSLKSEPVGTPNIEENKADSSAEAVVEEPNEAVAESSPNEEATGQKSEDTDTHSNEQADNGFVQTEEVAENNITTESAGENNEPADDAAMEFGRPEAEIETPEVNESIEDANEPAEDSNEPVEDSNKPVKDSNKPVEDSNKPVEDSNKPVEDSNKPVEDANEPVEDTSEPVEDAGEPVQETNEFTTDIASPRHQEEDIELEAEPKDATESVAVEPSNEDVKPEEKGSEAEDDINNVSKEAASGESTTHQKTEASASLESSAVTEEQETTEAEVNTDDVLSTKEAKKNTGNSNSNKKKNKKNKKKGKKK.

In terms of domain architecture, Fibronectin type-III spans 78-168 (KPESPVLKIV…EKVILRTHKM (91 aa)). The 97-residue stretch at 166–262 (HKMTDMSGIT…RIVGVRGFYL (97 aa)) folds into the BRCT domain. A disordered region spans residues 280 to 671 (EELSYSKENE…KKNKKKGKKK (392 aa)). T305 is subject to Phosphothreonine. Polar residues predominate over residues 311–321 (ASPNDNESNPS). Residues 322–332 (EAKEQGEKSGH) show a composition bias toward basic and acidic residues. 5 positions are modified to phosphoserine: S338, S362, S365, S383, and S384. Residues 349–365 (ALENETTIETVNPSVRS) are compositionally biased toward polar residues. A compositionally biased stretch (basic and acidic residues) spans 409 to 419 (KSEDTDTHSNE). Residues 434–443 (NNITTESAGE) show a composition bias toward polar residues. The segment covering 461–486 (EIETPEVNESIEDANEPAEDSNEPVE) has biased composition (acidic residues). Positions 487–521 (DSNKPVKDSNKPVEDSNKPVEDSNKPVEDSNKPVE) are enriched in basic and acidic residues. A compositionally biased stretch (acidic residues) spans 522–538 (DANEPVEDTSEPVEDAG). The span at 542-551 (QETNEFTTDI) shows a compositional bias: polar residues. Phosphoserine is present on residues S573 and S579. Over residues 581 to 591 (EDVKPEEKGSE) the composition is skewed to basic and acidic residues. A Glycyl lysine isopeptide (Lys-Gly) (interchain with G-Cter in ubiquitin) cross-link involves residue K584. S590 bears the Phosphoserine mark. Over residues 606–620 (GESTTHQKTEASASL) the composition is skewed to polar residues. Residues 627-638 (EEQETTEAEVNT) show a composition bias toward acidic residues. The span at 657–671 (NKKKNKKNKKKGKKK) shows a compositional bias: basic residues.

Belongs to the CHS5 family. In terms of assembly, component of the CHS5/6 complex composed of the 4 CHAPS proteins BCH1, BCH2, BUD7, and CHS6 as well as at least CHS5 and GTP-bound ARF1. The complex interacts with the cargo protein CHS3.

It localises to the golgi apparatus. Its subcellular location is the trans-Golgi network membrane. Component of the CHS5/6 complex which mediates export of specific cargo proteins, including chitin synthase CHS3. Also involved in targeting FUS1 to sites of polarized growth. In Saccharomyces cerevisiae (strain ATCC 204508 / S288c) (Baker's yeast), this protein is Chitin biosynthesis protein CHS5 (CHS5).